The chain runs to 134 residues: Methylmalonyl-CoA decarboxylase subunit gamma (134 aa).

A compositionally biased stretch (low complexity) spans A28–A38. Residues A28–T67 are disordered. Over residues P39–A53 the composition is skewed to pro residues. Residues P54 to T67 are compositionally biased toward low complexity. The 77-residue stretch at A58 to S134 folds into the Biotinyl-binding domain. The residue at position 100 (K100) is an N6-biotinyllysine.

The methylmalonyl-CoA decarboxylase is composed of four subunits: the carboxyltransferase alpha subunit (MmdA), the tunnel beta subunit (MmdB), the biotin-containing gamma subunit (MmdC) and the delta subunit (MmdD). The cofactor is biotin.

The protein resides in the cell membrane. The enzyme catalyses (S)-methylmalonyl-CoA + Na(+)(in) + H(+)(out) = propanoyl-CoA + Na(+)(out) + CO2. Functionally, biotin-containing subunit of the sodium ion pump methylmalonyl-CoA decarboxylase, which converts the chemical energy of a decarboxylation reaction into an electrochemical gradient of Na(+) ions across the cytoplasmic membrane, thereby creating a sodium ion motive force that is used for ATP synthesis. This is Methylmalonyl-CoA decarboxylase subunit gamma from Propionigenium modestum.